A 293-amino-acid polypeptide reads, in one-letter code: Phycoerythrin class 2 subunit gamma, linker polypeptide (293 aa).

Cysteine 49 serves as a coordination point for phycourobilin. The 180-residue stretch at alanine 50–aspartate 229 folds into the PBS-linker domain.

Contains one covalently linked phycourobilin chromophore.

It is found in the cellular thylakoid membrane. In terms of biological role, this protein is a bile pigment-bearing rod linker polypeptide that associates with C-phycoerythrin. In Synechococcus sp. (strain WH8020), this protein is Phycoerythrin class 2 subunit gamma, linker polypeptide (mpeC).